The primary structure comprises 87 residues: Phosphoribosyl-ATP pyrophosphatase (87 aa).

The protein belongs to the PRA-PH family.

It localises to the cytoplasm. The catalysed reaction is 1-(5-phospho-beta-D-ribosyl)-ATP + H2O = 1-(5-phospho-beta-D-ribosyl)-5'-AMP + diphosphate + H(+). It functions in the pathway amino-acid biosynthesis; L-histidine biosynthesis; L-histidine from 5-phospho-alpha-D-ribose 1-diphosphate: step 2/9. In Paenarthrobacter aurescens (strain TC1), this protein is Phosphoribosyl-ATP pyrophosphatase.